A 95-amino-acid polypeptide reads, in one-letter code: N(2)-fixation sustaining protein CowN (95 aa).

The protein belongs to the CowN family.

Is required to sustain N(2)-dependent growth in the presence of low levels of carbon monoxide (CO). Probably acts by protecting the N(2) fixation ability of the nitrogenase complex, which is inactivated in the presence of CO. This Allochromatium vinosum (strain ATCC 17899 / DSM 180 / NBRC 103801 / NCIMB 10441 / D) (Chromatium vinosum) protein is N(2)-fixation sustaining protein CowN.